The primary structure comprises 150 residues: Large ribosomal subunit protein bL9 (150 aa).

It belongs to the bacterial ribosomal protein bL9 family.

Its function is as follows. Binds to the 23S rRNA. This is Large ribosomal subunit protein bL9 from Methylibium petroleiphilum (strain ATCC BAA-1232 / LMG 22953 / PM1).